A 96-amino-acid chain; its full sequence is Large ribosomal subunit protein eL14 (96 aa).

Belongs to the eukaryotic ribosomal protein eL14 family.

The protein is Large ribosomal subunit protein eL14 of Sulfurisphaera tokodaii (strain DSM 16993 / JCM 10545 / NBRC 100140 / 7) (Sulfolobus tokodaii).